An 85-amino-acid chain; its full sequence is Large ribosomal subunit protein bL27 (85 aa).

It belongs to the bacterial ribosomal protein bL27 family.

The chain is Large ribosomal subunit protein bL27 from Sodalis glossinidius (strain morsitans).